A 91-amino-acid chain; its full sequence is Protein sigN139 (91 aa).

Asn23 and Asn34 each carry an N-linked (GlcNAc...) asparagine glycan. The helical transmembrane segment at 46–68 threads the bilayer; it reads LLPVVAFISGTVTSITGLVAGAL.

Its subcellular location is the membrane. In Dictyostelium discoideum (Social amoeba), this protein is Protein sigN139.